A 323-amino-acid chain; its full sequence is Sphingolipid delta(4)-desaturase DES1 (323 aa).

The N-myristoyl glycine moiety is linked to residue Gly2. The next 2 membrane-spanning stretches (helical) occupy residues Ser41–Val61 and Trp68–Ile88. Positions His89–His93 match the Histidine box-1 motif. A helical membrane pass occupies residues Ala102 to Val122. The Histidine box-2 signature appears at His128–His132. 3 helical membrane-spanning segments follow: residues Phe152–Phe172, Tyr184–Leu204, and Leu209–Phe229. A Histidine box-3 motif is present at residues His259–His263. Ser307 carries the post-translational modification Phosphoserine.

The protein belongs to the fatty acid desaturase type 1 family. DEGS subfamily. In terms of assembly, interacts with RLBP1; the interaction increases synthesis of chromophore-precursors by DEGS1. In terms of processing, myristoylation can target the enzyme to the mitochondria leading to an increase in ceramide levels.

It is found in the mitochondrion membrane. It localises to the endoplasmic reticulum membrane. It carries out the reaction an N-acylsphinganine + 2 Fe(II)-[cytochrome b5] + O2 + 2 H(+) = an N-acylsphing-4-enine + 2 Fe(III)-[cytochrome b5] + 2 H2O. The catalysed reaction is all-trans-retinol = 11-cis-retinol. The enzyme catalyses all-trans-retinol = 9-cis-retinol. It catalyses the reaction all-trans-retinol = 13-cis-retinol. It carries out the reaction 11-cis-retinol = 13-cis-retinol. The catalysed reaction is 11-cis-retinol = 9-cis-retinol. Functionally, has sphingolipid-delta-4-desaturase activity. Converts D-erythro-sphinganine to D-erythro-sphingosine (E-sphing-4-enine). Catalyzes the equilibrium isomerization of retinols. This is Sphingolipid delta(4)-desaturase DES1 (DEGS1) from Bos taurus (Bovine).